Consider the following 116-residue polypeptide: NADH-ubiquinone oxidoreductase chain 3 (116 aa).

Transmembrane regions (helical) follow at residues 6–26 (FMLL…FWLA), 56–76 (FFLV…LLPL), and 85–105 (PLLT…GLVY).

The protein belongs to the complex I subunit 3 family.

Its subcellular location is the mitochondrion membrane. It carries out the reaction a ubiquinone + NADH + 5 H(+)(in) = a ubiquinol + NAD(+) + 4 H(+)(out). Core subunit of the mitochondrial membrane respiratory chain NADH dehydrogenase (Complex I) that is believed to belong to the minimal assembly required for catalysis. Complex I functions in the transfer of electrons from NADH to the respiratory chain. The immediate electron acceptor for the enzyme is believed to be ubiquinone. The sequence is that of NADH-ubiquinone oxidoreductase chain 3 (MT-ND3) from Struthio camelus (Common ostrich).